The chain runs to 389 residues: MALQPSPLRVAMVAGEPSGDLLAASLLDGLASRLPAGTQYYGIGGPRMIATGFDAHFPMEKLTVRGYVEALKHIPEILGIRTELKRQLLAEPPSVFVGVDAPDFNFGLEHPLRDAGIPTVHFVCPSIWAWRGGRIKKIAKAVDHMLCVFPFETALLEKAGVAASYVGHPLADEIPLVPDTLGARRALGLAEEGPIIAVLPGSRRSEIDLIGPTFFAAIEMMQHQEPALRFVMPAATPALREMLRPLVDSHPGLALTITDGQSQLAMTAADAILVKSGTVTLEAALLKKPMVISYKVPWLTGQIMRRQGYLPYVGLPNILAGRFVVPEILQHFATPQALAEATLKQLRDENNRRTLTEIFTEMHHVLKQNTAQRAAEVVASVIEKRKARP.

It belongs to the LpxB family.

The enzyme catalyses a lipid X + a UDP-2-N,3-O-bis[(3R)-3-hydroxyacyl]-alpha-D-glucosamine = a lipid A disaccharide + UDP + H(+). It functions in the pathway bacterial outer membrane biogenesis; LPS lipid A biosynthesis. Its function is as follows. Condensation of UDP-2,3-diacylglucosamine and 2,3-diacylglucosamine-1-phosphate to form lipid A disaccharide, a precursor of lipid A, a phosphorylated glycolipid that anchors the lipopolysaccharide to the outer membrane of the cell. This chain is Lipid-A-disaccharide synthase, found in Paraburkholderia xenovorans (strain LB400).